The following is a 319-amino-acid chain: Serine/threonine-protein phosphatase PP1 isozyme 2 (319 aa).

Residues Asp-61, His-63, Asp-89, and Asn-121 each contribute to the Mn(2+) site. The active-site Proton donor is the His-122. 2 residues coordinate Mn(2+): His-170 and His-245.

It belongs to the PPP phosphatase family. PP-1 subfamily. It depends on Mn(2+) as a cofactor.

It carries out the reaction O-phospho-L-seryl-[protein] + H2O = L-seryl-[protein] + phosphate. The enzyme catalyses O-phospho-L-threonyl-[protein] + H2O = L-threonyl-[protein] + phosphate. This is Serine/threonine-protein phosphatase PP1 isozyme 2 from Acetabularia peniculus (Green alga).